We begin with the raw amino-acid sequence, 739 residues long: Malate synthase G (739 aa).

Over residues 1–18 (MTEQELLSAQTADNAGTD) the composition is skewed to polar residues. Positions 1–23 (MTEQELLSAQTADNAGTDSTERV) are disordered. Residues valine 135, 142–143 (RF), serine 292, and arginine 329 each bind acetyl-CoA. Arginine 356 functions as the Proton acceptor in the catalytic mechanism. Glyoxylate-binding positions include arginine 356, glutamate 447, and 472 to 475 (GFLD). Residues glutamate 447 and aspartate 475 each contribute to the Mg(2+) site. Proline 556 is a binding site for acetyl-CoA. Cysteine 633 is modified (cysteine sulfenic acid (-SOH)). Aspartate 647 functions as the Proton donor in the catalytic mechanism.

It belongs to the malate synthase family. GlcB subfamily. As to quaternary structure, monomer. Requires Mg(2+) as cofactor.

It is found in the cytoplasm. It carries out the reaction glyoxylate + acetyl-CoA + H2O = (S)-malate + CoA + H(+). Its pathway is carbohydrate metabolism; glyoxylate cycle; (S)-malate from isocitrate: step 2/2. Its activity is regulated as follows. Inhibited by oxalate, glycolate and ATP. Involved in the glycolate utilization. Catalyzes the condensation and subsequent hydrolysis of acetyl-coenzyme A (acetyl-CoA) and glyoxylate to form malate and CoA. The polypeptide is Malate synthase G (Corynebacterium glutamicum (strain ATCC 13032 / DSM 20300 / JCM 1318 / BCRC 11384 / CCUG 27702 / LMG 3730 / NBRC 12168 / NCIMB 10025 / NRRL B-2784 / 534)).